Reading from the N-terminus, the 75-residue chain is UPF0270 protein PP_1747 (75 aa).

It belongs to the UPF0270 family.

In Pseudomonas putida (strain ATCC 47054 / DSM 6125 / CFBP 8728 / NCIMB 11950 / KT2440), this protein is UPF0270 protein PP_1747.